A 91-amino-acid polypeptide reads, in one-letter code: DNA-directed RNA polymerase subunit omega (91 aa).

Belongs to the RNA polymerase subunit omega family. The RNAP catalytic core consists of 2 alpha, 1 beta, 1 beta' and 1 omega subunit. When a sigma factor is associated with the core the holoenzyme is formed, which can initiate transcription.

It catalyses the reaction RNA(n) + a ribonucleoside 5'-triphosphate = RNA(n+1) + diphosphate. Promotes RNA polymerase assembly. Latches the N- and C-terminal regions of the beta' subunit thereby facilitating its interaction with the beta and alpha subunits. The chain is DNA-directed RNA polymerase subunit omega from Enterobacter sp. (strain 638).